A 70-amino-acid chain; its full sequence is Small ribosomal subunit protein bS21 (70 aa).

The protein belongs to the bacterial ribosomal protein bS21 family.

The polypeptide is Small ribosomal subunit protein bS21 (Helicobacter acinonychis (strain Sheeba)).